The primary structure comprises 187 residues: Protein GrpE (187 aa).

Residues 1-30 (MEKKETKSESEKTNKQDNKNTKSQKKENLN) form a disordered region.

Belongs to the GrpE family. As to quaternary structure, homodimer.

It is found in the cytoplasm. In terms of biological role, participates actively in the response to hyperosmotic and heat shock by preventing the aggregation of stress-denatured proteins, in association with DnaK and GrpE. It is the nucleotide exchange factor for DnaK and may function as a thermosensor. Unfolded proteins bind initially to DnaJ; upon interaction with the DnaJ-bound protein, DnaK hydrolyzes its bound ATP, resulting in the formation of a stable complex. GrpE releases ADP from DnaK; ATP binding to DnaK triggers the release of the substrate protein, thus completing the reaction cycle. Several rounds of ATP-dependent interactions between DnaJ, DnaK and GrpE are required for fully efficient folding. The protein is Protein GrpE of Borreliella burgdorferi (strain ATCC 35210 / DSM 4680 / CIP 102532 / B31) (Borrelia burgdorferi).